Here is a 198-residue protein sequence, read N- to C-terminus: Ribonuclease HII (198 aa).

The region spanning Q10–S198 is the RNase H type-2 domain. Residues D16, E17, and D108 each contribute to the a divalent metal cation site.

This sequence belongs to the RNase HII family. Mn(2+) is required as a cofactor. Requires Mg(2+) as cofactor.

The protein resides in the cytoplasm. It carries out the reaction Endonucleolytic cleavage to 5'-phosphomonoester.. Its function is as follows. Endonuclease that specifically degrades the RNA of RNA-DNA hybrids. This chain is Ribonuclease HII, found in Shigella boydii serotype 18 (strain CDC 3083-94 / BS512).